Here is an 882-residue protein sequence, read N- to C-terminus: MKNWIKLKLTAIGWFIYGMPISVFYRYLWLRNKTLLFKTIAVHYIIPLIIELLPWYASKRKIGNYLRTSRVEITHTMSTNGPYSHSAVIKYVLLTIYYAILDNINSHLISIVSLENRLQIRRLVMEKLLYSEIGAFDFLRKKKNIGPAELEYKLSSSINTTISFFTYTIPDLIASIYAFVIEGSELLKKGHKIDPLIVLHPILIAIYQKVSQKLRERLVENNPDSSKFKDPYNSAMSKMISNTAEGLSDIQINNLQETQLGLFDNLIEKELSNTQSFSTLISRTWRSIHNRSLFEFAAEVWVAHKVMDRQKIDNQLYRTTLLDINRVIRLGNRLFQSLGSFKNIYKHQKKVKKLLNIPTFIEEDSHLKYIYKFEELKVSSDLKFSYENKFSSELPSFPVLDLQNEMVILPNKRYALIGQNRSGKSTLNHLLCKLYTPTEGQISMNGIPYSEISRSSIRRMISYVSQRPFIFPGTIMDNIRVGNPSATEEQVLEAADAAGVFAFADDNNFSLKQSFDSLSDTFDPDMEIPPTISPLSTSSNNINNTTTTTTNNNNNNNNNNNNNNNNNNNNNNNNNNNNNNNNNNNNNNNNNKNNNNNNNKPTTPTFVPSSPSQYSTINKSTIINNNTFIRRNSSMSQLNNSGGGNVNGNNNNNNNNNNNNNININNSGVGGRRNSVMDLQNKLLNQCDESESNKLVKRVWSVLNLTSISNSGGGDESDDDDEEAERNQRSLTPIIVPQLIDGGLSNHPILNQVVEAGGKNISGGFAQSIALARIFVRTEAKIVILDESMSQMDAFKKREIIFPKLFGFAEKHNITLIIVTHDLASVQNTVDHIFVLDHGKLCHQGSHEELMNENAQVYYKLLGLRKRFKNQSFNNLNTNTNK.

Transmembrane regions (helical) follow at residues 4–24, 35–55, and 79–101; these read WIKL…ISVF, LLFK…LLPW, and TNGP…YAIL. Residues 384 to 863 enclose the ABC transporter domain; it reads FSYENKFSSE…NAQVYYKLLG (480 aa). 418–425 is a binding site for ATP; that stretch reads GQNRSGKS. Disordered regions lie at residues 522 to 617, 634 to 669, and 710 to 730; these read FDPD…YSTI, SMSQ…NSGV, and NSGG…NQRS. 2 stretches are compositionally biased toward low complexity: residues 528-617 and 647-667; these read IPPT…YSTI and NGNN…INNS. Residues 715-724 are compositionally biased toward acidic residues; sequence DESDDDDEEA.

This sequence belongs to the ABC transporter superfamily. ABCH family.

It localises to the membrane. The protein is ABC transporter H family member 4 (abcH4) of Dictyostelium discoideum (Social amoeba).